Here is a 323-residue protein sequence, read N- to C-terminus: Apolipoprotein E (323 aa).

The first 18 residues, 1–18, serve as a signal peptide directing secretion; it reads MKVLWAALVVTLLAGCWA. 8 consecutive repeat copies span residues 86–107, 108–129, 130–151, 152–173, 174–195, 196–217, 218–239, and 240–261. The segment at 86–261 is 8 X 22 AA approximate tandem repeats; that stretch reads ALMDETMKEV…HLEEMREQIQ (176 aa). A Methionine sulfoxide modification is found at M149. Position 153 is a phosphoserine (S153). Positions 164–174 are LDL and other lipoprotein receptors binding; sequence HMRKLRKRVLR. 168–171 contributes to the heparin binding site; the sequence is LRKR. The segment at 216–296 is lipid-binding and lipoprotein association; sequence NAKVGALATQ…SWFEPLLEDM (81 aa). Position 235–242 (235–242) interacts with heparin; it reads GQQLRGQL. The segment at 272–323 is homooligomerization; that stretch reads DQIRQKAEAFQARLKSWFEPLLEDMQRQWDGLVEKVQAAVATIPTSKPVEEP. The specificity for association with VLDL stretch occupies residues 284–296; that stretch reads RLKSWFEPLLEDM.

Belongs to the apolipoprotein A1/A4/E family. In terms of assembly, homotetramer. May interact with ABCA1; functionally associated with ABCA1 in the biogenesis of HDLs. May interact with APP/A4 amyloid-beta peptide; the interaction is extremely stable in vitro but its physiological significance is unclear. May interact with MAPT. May interact with MAP2. In the cerebrospinal fluid, interacts with secreted SORL1. Interacts with PMEL; this allows the loading of PMEL luminal fragment on ILVs to induce fibril nucleation. Post-translationally, APOE exists as multiple glycosylated and sialylated glycoforms within cells and in plasma. The extent of glycosylation and sialylation are tissue and context specific. In terms of processing, glycated in plasma VLDL. Phosphorylated by FAM20C in the extracellular medium.

It localises to the secreted. The protein resides in the extracellular space. It is found in the extracellular matrix. Its subcellular location is the extracellular vesicle. The protein localises to the endosome. It localises to the multivesicular body. In terms of biological role, APOE is an apolipoprotein, a protein associating with lipid particles, that mainly functions in lipoprotein-mediated lipid transport between organs via the plasma and interstitial fluids. APOE is a core component of plasma lipoproteins and is involved in their production, conversion and clearance. Apolipoproteins are amphipathic molecules that interact both with lipids of the lipoprotein particle core and the aqueous environment of the plasma. As such, APOE associates with chylomicrons, chylomicron remnants, very low density lipoproteins (VLDL) and intermediate density lipoproteins (IDL) but shows a preferential binding to high-density lipoproteins (HDL). It also binds a wide range of cellular receptors including the LDL receptor/LDLR and the very low-density lipoprotein receptor/VLDLR that mediate the cellular uptake of the APOE-containing lipoprotein particles. Finally, APOE also has a heparin-binding activity and binds heparan-sulfate proteoglycans on the surface of cells, a property that supports the capture and the receptor-mediated uptake of APOE-containing lipoproteins by cells. This is Apolipoprotein E (APOE) from Canis lupus familiaris (Dog).